A 624-amino-acid polypeptide reads, in one-letter code: Chaperone protein HtpG (624 aa).

The a; substrate-binding stretch occupies residues Met1–Arg336. A b region spans residues Glu337–Lys552. Residues Leu553–Ser624 form a c region.

Belongs to the heat shock protein 90 family. In terms of assembly, homodimer.

It is found in the cytoplasm. In terms of biological role, molecular chaperone. Has ATPase activity. This is Chaperone protein HtpG from Cronobacter sakazakii (strain ATCC BAA-894) (Enterobacter sakazakii).